A 394-amino-acid polypeptide reads, in one-letter code: 8-amino-7-oxononanoate synthase (394 aa).

Arginine 22 is a binding site for substrate. 113-114 (GY) contributes to the pyridoxal 5'-phosphate binding site. Histidine 138 is a binding site for substrate. Serine 184, histidine 212, and threonine 240 together coordinate pyridoxal 5'-phosphate. The residue at position 243 (lysine 243) is an N6-(pyridoxal phosphate)lysine. Threonine 359 is a binding site for substrate.

It belongs to the class-II pyridoxal-phosphate-dependent aminotransferase family. BioF subfamily. As to quaternary structure, homodimer. The cofactor is pyridoxal 5'-phosphate.

The catalysed reaction is 6-carboxyhexanoyl-[ACP] + L-alanine + H(+) = (8S)-8-amino-7-oxononanoate + holo-[ACP] + CO2. Its pathway is cofactor biosynthesis; biotin biosynthesis. In terms of biological role, catalyzes the decarboxylative condensation of pimeloyl-[acyl-carrier protein] and L-alanine to produce 8-amino-7-oxononanoate (AON), [acyl-carrier protein], and carbon dioxide. In Janthinobacterium sp. (strain Marseille) (Minibacterium massiliensis), this protein is 8-amino-7-oxononanoate synthase.